The sequence spans 520 residues: Cholesterol side-chain cleavage enzyme, mitochondrial (520 aa).

Residues 1–36 constitute a mitochondrion transit peptide; it reads MLAKGLSLRSVLAKGCQPFLSPTWQSSVLATGGGAN. Residue Cys458 coordinates heme.

This sequence belongs to the cytochrome P450 family. Interacts with FDX1/adrenodoxin. Heme serves as cofactor.

It is found in the mitochondrion inner membrane. The catalysed reaction is 6 reduced [adrenodoxin] + cholesterol + 3 O2 + 6 H(+) = 4-methylpentanal + pregnenolone + 6 oxidized [adrenodoxin] + 4 H2O. It catalyses the reaction 2 reduced [adrenodoxin] + cholesterol + O2 + 2 H(+) = (22R)-hydroxycholesterol + 2 oxidized [adrenodoxin] + H2O. It carries out the reaction (22R)-hydroxycholesterol + 2 reduced [adrenodoxin] + O2 + 2 H(+) = (20R,22R)-20,22-dihydroxycholesterol + 2 oxidized [adrenodoxin] + H2O. The enzyme catalyses (20R,22R)-20,22-dihydroxycholesterol + 2 reduced [adrenodoxin] + O2 + 2 H(+) = 4-methylpentanal + pregnenolone + 2 oxidized [adrenodoxin] + 2 H2O. The protein operates within lipid metabolism; C21-steroid hormone metabolism. It participates in steroid metabolism; cholesterol metabolism. Functionally, a cytochrome P450 monooxygenase that catalyzes the side-chain hydroxylation and cleavage of cholesterol to pregnenolone, the precursor of most steroid hormones. Catalyzes three sequential oxidation reactions of cholesterol, namely the hydroxylation at C22 followed with the hydroxylation at C20 to yield 20R,22R-hydroxycholesterol that is further cleaved between C20 and C22 to yield the C21-steroid pregnenolone and 4-methylpentanal. Mechanistically, uses molecular oxygen inserting one oxygen atom into a substrate and reducing the second into a water molecule. Two electrons are provided by NADPH via a two-protein mitochondrial transfer system comprising flavoprotein FDXR (adrenodoxin/ferredoxin reductase) and nonheme iron-sulfur protein FDX1 or FDX2 (adrenodoxin/ferredoxin). This Mesocricetus auratus (Golden hamster) protein is Cholesterol side-chain cleavage enzyme, mitochondrial (CYP11A1).